The primary structure comprises 345 residues: Beta-ketoacyl-[acyl-carrier-protein] synthase III (345 aa).

Residues C114 and H272 contribute to the active site. Positions 273-277 (QANQR) are ACP-binding. N302 is an active-site residue.

It belongs to the thiolase-like superfamily. FabH family. As to quaternary structure, homodimer.

The protein localises to the cytoplasm. It carries out the reaction malonyl-[ACP] + acetyl-CoA + H(+) = 3-oxobutanoyl-[ACP] + CO2 + CoA. It functions in the pathway lipid metabolism; fatty acid biosynthesis. In terms of biological role, catalyzes the condensation reaction of fatty acid synthesis by the addition to an acyl acceptor of two carbons from malonyl-ACP. Catalyzes the first condensation reaction which initiates fatty acid synthesis and may therefore play a role in governing the total rate of fatty acid production. Possesses both acetoacetyl-ACP synthase and acetyl transacylase activities. Its substrate specificity determines the biosynthesis of branched-chain and/or straight-chain of fatty acids. This chain is Beta-ketoacyl-[acyl-carrier-protein] synthase III, found in Rhodopirellula baltica (strain DSM 10527 / NCIMB 13988 / SH1).